A 180-amino-acid chain; its full sequence is MKNKLKKKKNPKGTKKIKAKAKAHKVGTTKVKVKKKIYTIGTLHDLPSQIESYSDKESYSDKESYSDKESYSDKESYSDKESYSDKNILVKIFYEPEIRYLTPLEIETKPENKYCFFKKNNIKYIDFKNPSFLMKFLNERGEILPRRITGTSKKFQKKLKRAIKKCKHIGLLPYLTDGLR.

2 disordered regions span residues 1 to 26 (MKNK…AHKV) and 53 to 82 (YSDK…DKES).

Belongs to the bacterial ribosomal protein bS18 family. As to quaternary structure, part of the 30S ribosomal subunit. Forms a tight heterodimer with protein bS6.

Its function is as follows. Binds as a heterodimer with protein bS6 to the central domain of the 16S rRNA, where it helps stabilize the platform of the 30S subunit. The sequence is that of Small ribosomal subunit protein bS18 from Karelsulcia muelleri (strain GWSS) (Sulcia muelleri).